The chain runs to 88 residues: MANTKQAQKRARQAEQRRQHNASQRSMVRTYIKRVIKAIQGGDHAQAMTEFKAAQPVIDRIADKDAISKKKAARIKSRLNKRIKALAA.

The interval methionine 1–methionine 27 is disordered.

The protein belongs to the bacterial ribosomal protein bS20 family.

Functionally, binds directly to 16S ribosomal RNA. In Chromohalobacter salexigens (strain ATCC BAA-138 / DSM 3043 / CIP 106854 / NCIMB 13768 / 1H11), this protein is Small ribosomal subunit protein bS20.